Consider the following 591-residue polypeptide: Serine/threonine-protein kinase Nek2 (591 aa).

Residues 4 to 258 form the Protein kinase domain; sequence YEVLEQIGKG…AAQLLKHPQL (255 aa). Residues 10 to 18 and K33 each bind ATP; that span reads IGKGAFGSA. The Proton acceptor role is filled by D129. 3 disordered regions span residues 309-331, 387-408, and 500-534; these read LGNERTVTFSKPSPERNSVSSTR, EPPKTSYNRTYRSELPSKTTPN, and RTDGDNGSDSSGRNATAASSRGSNDSRQQRFDTSS. 2 stretches are compositionally biased toward polar residues: residues 391–408 and 504–534; these read TSYNRTYRSELPSKTTPN and DNGSDSSGRNATAASSRGSNDSRQQRFDTSS.

Belongs to the protein kinase superfamily. NEK Ser/Thr protein kinase family. NIMA subfamily.

It carries out the reaction L-seryl-[protein] + ATP = O-phospho-L-seryl-[protein] + ADP + H(+). The catalysed reaction is L-threonyl-[protein] + ATP = O-phospho-L-threonyl-[protein] + ADP + H(+). In terms of biological role, may be involved in plant development processes. The chain is Serine/threonine-protein kinase Nek2 (NEK2) from Oryza sativa subsp. indica (Rice).